A 419-amino-acid chain; its full sequence is DNA ligase (419 aa).

The tract at residues 1–120 (MLSQFPGQCS…ARQKRGAHTN (120 aa)) is NTD. The tract at residues 121 to 317 (RGMIPPMLVK…NYHSPHLAKL (197 aa)) is AD domain. Residues histidine 149, lysine 151, glutamate 203, and phenylalanine 232 each contribute to the ATP site. The active-site N6-AMP-lysine intermediate is the lysine 151. Glutamate 203 provides a ligand contact to a divalent metal cation. Glutamate 291 lines the a divalent metal cation pocket. Residues isoleucine 294 and lysine 316 each coordinate ATP. The interval 318-419 (KPLLDAEFIL…REPINVLEII (102 aa)) is OB domain.

Belongs to the ATP-dependent DNA ligase family. It depends on a divalent metal cation as a cofactor.

Its subcellular location is the virion. The catalysed reaction is ATP + (deoxyribonucleotide)n-3'-hydroxyl + 5'-phospho-(deoxyribonucleotide)m = (deoxyribonucleotide)n+m + AMP + diphosphate.. Functionally, very low-fidelity DNA ligase that seals nicks in double-stranded DNA during DNA repair. Together with the viral repair DNA polymerase X, fills the single nucleotide gaps generated by the AP endonuclease. It is not essential for viral replication and recombination. Displays a very low adenylation activity towards DNA with 3'-dideoxy- or 3'-amino-terminated nicks compared to regular nick DNA. The sequence is that of DNA ligase (LIG) from Ornithodoros (relapsing fever ticks).